A 292-amino-acid chain; its full sequence is Glycine--tRNA ligase alpha subunit (292 aa).

This sequence belongs to the class-II aminoacyl-tRNA synthetase family. Tetramer of two alpha and two beta subunits.

It localises to the cytoplasm. The enzyme catalyses tRNA(Gly) + glycine + ATP = glycyl-tRNA(Gly) + AMP + diphosphate. The polypeptide is Glycine--tRNA ligase alpha subunit (Desulfovibrio desulfuricans (strain ATCC 27774 / DSM 6949 / MB)).